The following is a 507-amino-acid chain: Natural resistance-associated macrophage protein 1 (507 aa).

Positions 1-36 are disordered; it reads MIRDKNPQRVNRPSYGSISSLPSPAPQPEPSRNTYL. Residues 1–39 lie on the Cytoplasmic side of the membrane; sequence MIRDKNPQRVNRPSYGSISSLPSPAPQPEPSRNTYLSEK. Residues 8–22 show a composition bias toward polar residues; the sequence is QRVNRPSYGSISSLP. A helical transmembrane segment spans residues 40-60; the sequence is IPIPSTEQLLWVLLWATVLGL. Over 61 to 123 the chain is Extracellular; it reads LCQRLAARLG…ISFNLLSAGR (63 aa). The chain crosses the membrane as a helical span at residues 124 to 144; sequence IPLWGGVLITIVDTFFFLFLD. At 145 to 152 the chain is on the cytoplasmic side; it reads NYGLRKLE. The chain crosses the membrane as a helical span at residues 153-173; that stretch reads AFFGFLVTIMALTFGYEYVVA. The Extracellular segment spans residues 174 to 199; it reads RPSQGALLKGLFLPSCPGCGQPELLQ. The chain crosses the membrane as a helical span at residues 200–220; it reads AVGIVGAIIMPHNIYLHSALV. Topologically, residues 221–245 are cytoplasmic; sequence KSREVDRTRRGDVREANMYFLTEAT. Residues 246 to 266 form a helical membrane-spanning segment; that stretch reads IALFVSFIINLFVMAVFGQAF. Topologically, residues 267–305 are extracellular; that stretch reads YQQTNEEAFNICANSSLHNYAKIFPRDNNTVSVDIYQGG. N-linked (GlcNAc...) asparagine glycosylation is found at asparagine 280 and asparagine 294. Residues 306 to 326 form a helical membrane-spanning segment; it reads VILGCLFGPAALYIWAVGLLA. Residues 327–353 lie on the Cytoplasmic side of the membrane; it reads AGQSSTMTGTYAGQFVMEGFLKLRWSR. The chain crosses the membrane as a helical span at residues 354 to 374; the sequence is FARVLLTRSCAILPTVLVAVF. Residues 375–391 lie on the Extracellular side of the membrane; sequence RDLRDLSGLNDLLNVLQ. Residues 392-412 traverse the membrane as a helical segment; the sequence is SLLLPFAVLPILTFTSMPAVM. Residues 413–422 are Cytoplasmic-facing; sequence QEFANGWLSK. The chain crosses the membrane as a helical span at residues 423–443; it reads VITSCIMALVCAINLYFVISY. Residues 444-451 are Extracellular-facing; sequence LPSLPHPA. A helical membrane pass occupies residues 452–472; that stretch reads YFGLVALLAIGYLGLTAYLAW. The Cytoplasmic segment spans residues 473-507; the sequence is TCCIAHGAKFLTHSSHQRFLYGLPIEEQEGREGSG.

It belongs to the NRAMP family.

It localises to the late endosome membrane. The protein resides in the lysosome membrane. It catalyses the reaction Zn(2+)(in) + H(+)(out) = Zn(2+)(out) + H(+)(in). It carries out the reaction Fe(2+)(in) + H(+)(out) = Fe(2+)(out) + H(+)(in). The catalysed reaction is Mn(2+)(in) + H(+)(out) = Mn(2+)(out) + H(+)(in). Its function is as follows. Macrophage-specific antiporter that fluxes metal ions in either direction against a proton gradient. Localized to late endosomal lysosomal membranes, delivers bivalent cations from the cytosol into these acidic compartments where they may directly affect antimicrobial activity. Involved in iron metabolism and host natural resistance to infection with intracellular parasites. Pathogen resistance involves sequestration of Fe(2+) and Mn(2+), cofactors of both prokaryotic and eukaryotic catalases and superoxide dismutases, not only to protect the macrophage against its own generation of reactive oxygen species, but to deny the cations to the pathogen for synthesis of its protective enzymes. This chain is Natural resistance-associated macrophage protein 1 (Slc11a1), found in Rattus norvegicus (Rat).